Reading from the N-terminus, the 537-residue chain is Eukaryotic translation initiation factor 3 subunit L (537 aa).

The segment covering 1-19 (MSRRVEFDLSTEDHSDRRR) has biased composition (basic and acidic residues). A disordered region spans residues 1 to 30 (MSRRVEFDLSTEDHSDRRRTNTFSSSADED). Residues 299–487 (EATKMFVNCL…GPSSADDDEP (189 aa)) form the PCI domain.

It belongs to the eIF-3 subunit L family. Component of the eukaryotic translation initiation factor 3 (eIF-3) complex.

It is found in the cytoplasm. Functionally, component of the eukaryotic translation initiation factor 3 (eIF-3) complex, which is involved in protein synthesis of a specialized repertoire of mRNAs and, together with other initiation factors, stimulates binding of mRNA and methionyl-tRNAi to the 40S ribosome. The eIF-3 complex specifically targets and initiates translation of a subset of mRNAs involved in cell proliferation. The chain is Eukaryotic translation initiation factor 3 subunit L from Caenorhabditis elegans.